Reading from the N-terminus, the 136-residue chain is Small ribosomal subunit protein uS12 (136 aa).

Residues 1-28 (MPTIQQLIRSERQELKKKTKSPALKSCP) are disordered. Position 89 is a 3-methylthioaspartic acid (Asp-89). The tract at residues 101–136 (TLDTAGVKDRKQGRSKYGAKRPKPGAASTASTGKKR) is disordered. A compositionally biased stretch (basic residues) spans 113–123 (GRSKYGAKRPK).

It belongs to the universal ribosomal protein uS12 family. Part of the 30S ribosomal subunit. Contacts proteins S8 and S17. May interact with IF1 in the 30S initiation complex.

With S4 and S5 plays an important role in translational accuracy. Its function is as follows. Interacts with and stabilizes bases of the 16S rRNA that are involved in tRNA selection in the A site and with the mRNA backbone. Located at the interface of the 30S and 50S subunits, it traverses the body of the 30S subunit contacting proteins on the other side and probably holding the rRNA structure together. The combined cluster of proteins S8, S12 and S17 appears to hold together the shoulder and platform of the 30S subunit. The polypeptide is Small ribosomal subunit protein uS12 (Cyanothece sp. (strain PCC 7425 / ATCC 29141)).